We begin with the raw amino-acid sequence, 460 residues long: ATP synthase subunit beta (460 aa).

Residue 150–157 (GGAGVGKT) coordinates ATP.

It belongs to the ATPase alpha/beta chains family. As to quaternary structure, F-type ATPases have 2 components, CF(1) - the catalytic core - and CF(0) - the membrane proton channel. CF(1) has five subunits: alpha(3), beta(3), gamma(1), delta(1), epsilon(1). CF(0) has three main subunits: a(1), b(2) and c(9-12). The alpha and beta chains form an alternating ring which encloses part of the gamma chain. CF(1) is attached to CF(0) by a central stalk formed by the gamma and epsilon chains, while a peripheral stalk is formed by the delta and b chains.

The protein resides in the cell inner membrane. It carries out the reaction ATP + H2O + 4 H(+)(in) = ADP + phosphate + 5 H(+)(out). Its function is as follows. Produces ATP from ADP in the presence of a proton gradient across the membrane. The catalytic sites are hosted primarily by the beta subunits. This chain is ATP synthase subunit beta, found in Sodalis glossinidius (strain morsitans).